The chain runs to 1120 residues: Vacuolar cation-chloride cotransporter 1 (1120 aa).

Positions 1–21 are disordered; sequence MVSRFYQIPGTHRPSSAISSS. At 1-62 the chain is on the cytoplasmic side; it reads MVSRFYQIPG…YDPDNPNKDK (62 aa). Ser-34 carries the post-translational modification Phosphoserine. The chain crosses the membrane as a helical span at residues 63–83; it reads LGTYDGVFVPTALNVLSILMF. Residues 84 to 85 lie on the Vacuolar side of the membrane; sequence LR. The chain crosses the membrane as a helical span at residues 86 to 106; sequence FGFILGQLGIICTIGLLLLSY. Topologically, residues 107–145 are cytoplasmic; that stretch reads TINLLTTLSISAISTNGTVRGGGAYYMISRSLGPEFGGS. Residues 146–166 traverse the membrane as a helical segment; that stretch reads IGLVFFLGQVFNAGMNAVGII. Topologically, residues 167-193 are vacuolar; the sequence is EPLLYNLGYSAQGEPPAALGELLPRGH. The helical transmembrane segment at 194 to 214 threads the bilayer; sequence WHEFTYATVILFLCFSVAFVG. Topologically, residues 215–221 are cytoplasmic; that stretch reads SQTVSRA. Residues 222 to 242 form a helical membrane-spanning segment; sequence GNILFLVLAASIFSIPLSALI. At 243-283 the chain is on the vacuolar side; that stretch reads RSPFTEGGISYTGPSWQTFHDNLLPHLTKGAAGSLLKGKET. The chain crosses the membrane as a helical span at residues 284 to 304; sequence FNDLFGVFFPATAGIFAGAGM. The Cytoplasmic segment spans residues 305–317; that stretch reads SSELRKPSKSIPK. The chain crosses the membrane as a helical span at residues 318–338; it reads GTLWGLLFTFICYAVVVFSMG. The Vacuolar segment spans residues 339–360; it reads CSIPRRSLYDEVQIIQTISSVQ. A helical transmembrane segment spans residues 361–381; sequence WVIFMGEMATSLFSIIVGMLG. Over 382–393 the chain is Cytoplasmic; that stretch reads AAYVLEAIAKDN. Residues 394 to 414 traverse the membrane as a helical segment; that stretch reads IIPGLEIFAHSPLYSLIFTWI. Over 415–430 the chain is Vacuolar; the sequence is LTQLCLFSDVNKIATF. A helical membrane pass occupies residues 431–451; it reads ITMTFLMTFVVMNLACFLLGI. Over 452–462 the chain is Cytoplasmic; sequence SSAPNFRPSFK. The chain crosses the membrane as a helical span at residues 463 to 482; sequence YFNRYTTAIGALLSVVAMLI. Topologically, residues 483-487 are vacuolar; that stretch reads VDGIS. A helical membrane pass occupies residues 488–506; that stretch reads ASVLFLAMILLFLFIHYFS. Over 507–1120 the chain is Cytoplasmic; that stretch reads PPKSWGDVSQ…SQTMTVTTAL (614 aa). Residues Ser-654, Ser-915, and Ser-918 each carry the phosphoserine modification.

The protein belongs to the SLC12A transporter family.

It localises to the vacuole membrane. Its function is as follows. Catalyzes the coordinated symport of chloride with potassium ions across the vacuolar membrane. Involved in vacuolar osmoregulation. This Saccharomyces cerevisiae (strain ATCC 204508 / S288c) (Baker's yeast) protein is Vacuolar cation-chloride cotransporter 1.